We begin with the raw amino-acid sequence, 320 residues long: Ferrochelatase (320 aa).

Fe cation-binding residues include His194 and Glu275.

The protein belongs to the ferrochelatase family. As to quaternary structure, monomer.

The protein resides in the cytoplasm. It carries out the reaction heme b + 2 H(+) = protoporphyrin IX + Fe(2+). It functions in the pathway porphyrin-containing compound metabolism; protoheme biosynthesis; protoheme from protoporphyrin-IX: step 1/1. Its function is as follows. Catalyzes the ferrous insertion into protoporphyrin IX. This chain is Ferrochelatase, found in Shigella boydii serotype 18 (strain CDC 3083-94 / BS512).